Reading from the N-terminus, the 394-residue chain is C-19 steroid 1alpha-hydroxylase (394 aa).

Heme b contacts are provided by His-81, Arg-85, Arg-281, Gly-335, His-338, and Cys-340.

It belongs to the cytochrome P450 family. Requires heme b as cofactor.

The catalysed reaction is testosterone + 2 reduced [2Fe-2S]-[ferredoxin] + O2 + 2 H(+) = 1alpha-hydroxytestosterone + 2 oxidized [2Fe-2S]-[ferredoxin] + H2O. The enzyme catalyses androst-4-ene-3,17-dione + 2 reduced [2Fe-2S]-[ferredoxin] + O2 + 2 H(+) = 1alpha-hydroxyandrost-4-ene-3,17-dione + 2 oxidized [2Fe-2S]-[ferredoxin] + H2O. Its function is as follows. Hydroxylase that can catalyze the in vitro conversion of the sesquiterpenoid nootkatone, a natural organic compound produced by some plants, to at least five hydrophilic products. The native ferredoxin reductase FdR_B and either Fdx2 or Fdx8 ferredoxins can act as the redox partners for the conversion of nootkatone. In addition, acts as a steroid 1alpha-hydroxylase, when associated in vitro with the surrogate redox partners bovine adrenodoxin (Adx) and adrenodoxin reductase (Adr). Acts on several C-19 steroid substrates, including testosterone and androstenedione, which are hydroxylated to 1alpha-hydroxytestosterone and 1alpha-hydroxyandrostenedione, respectively. Can use their derivatives testosterone-acetate and 11-oxoandrostenedione, but not vitamin D3 and 25-hydroxyvitamin D3. Also catalyzes the hydroxylation of the C-21 steroid 11-deoxycorticosterone to 1alpha-hydroxy-11-deoxycorticosterone. Catalyzes the hydroxylation of the C-21 steroid progesterone, leading to the formation of seven products: two major (1alpha-hydroxyprogesterone and 17alpha-hydroxyprogesterone) and five minor products. The protein is C-19 steroid 1alpha-hydroxylase of Sorangium cellulosum (strain So ce56) (Polyangium cellulosum (strain So ce56)).